A 473-amino-acid polypeptide reads, in one-letter code: Response regulator protein FleR (473 aa).

The region spanning 4–118 (KVLLVEDDRA…ALLDLVARHA (115 aa)) is the Response regulatory domain. Residue aspartate 53 is modified to 4-aspartylphosphate. In terms of domain architecture, Sigma-54 factor interaction spans 130 to 359 (PVALEPASRQ…LDNAIQRALI (230 aa)). Residues 158–165 (GESGTGKE) and 221–230 (ADGGTILLDE) each bind ATP.

Member of the two-component regulatory system FleS/FleR that regulates the expression of multiple genes involved in flagellar synthesis, adhesion, swarming, motility and antibiotic resistance. May function as a transcriptional activator by direct binding to a cis-acting sequence upstream of the target genes. The sequence is that of Response regulator protein FleR from Pseudomonas aeruginosa (strain ATCC 15692 / DSM 22644 / CIP 104116 / JCM 14847 / LMG 12228 / 1C / PRS 101 / PAO1).